The following is a 312-amino-acid chain: Aspartoacylase (312 aa).

2 residues coordinate Zn(2+): histidine 20 and glutamate 23. The N-acetyl-L-aspartate site is built by arginine 62, asparagine 69, and arginine 70. A Zn(2+)-binding site is contributed by histidine 115. Tyrosine 163 and arginine 167 together coordinate N-acetyl-L-aspartate. The Proton donor/acceptor role is filled by glutamate 177. Tyrosine 287 contacts N-acetyl-L-aspartate.

Belongs to the AspA/AstE family. Aspartoacylase subfamily. In terms of assembly, homodimer. It depends on Zn(2+) as a cofactor. Detected in kidney proximal tubule cells (at protein level).

Its subcellular location is the cytoplasm. The protein resides in the nucleus. It catalyses the reaction an N-acyl-L-aspartate + H2O = a carboxylate + L-aspartate. The catalysed reaction is N-acetyl-L-aspartate + H2O = L-aspartate + acetate. Catalyzes the deacetylation of N-acetylaspartic acid (NAA) to produce acetate and L-aspartate. NAA occurs in high concentration in brain and its hydrolysis NAA plays a significant part in the maintenance of intact white matter. In other tissues it acts as a scavenger of NAA from body fluids. In Rattus norvegicus (Rat), this protein is Aspartoacylase.